Consider the following 197-residue polypeptide: Probable chorismate pyruvate-lyase 2 (197 aa).

Positions 1–14 (MRFDAADAHWRETP) are enriched in basic and acidic residues. The segment at 1–23 (MRFDAADAHWRETPRPGASSAQK) is disordered. Residues arginine 73, leucine 111, and glutamate 173 each coordinate substrate.

The protein belongs to the UbiC family.

It is found in the cytoplasm. The enzyme catalyses chorismate = 4-hydroxybenzoate + pyruvate. The protein operates within cofactor biosynthesis; ubiquinone biosynthesis. Its function is as follows. Removes the pyruvyl group from chorismate, with concomitant aromatization of the ring, to provide 4-hydroxybenzoate (4HB) for the ubiquinone pathway. The chain is Probable chorismate pyruvate-lyase 2 from Burkholderia pseudomallei (strain 1710b).